Reading from the N-terminus, the 112-residue chain is Putative RNase TTE0752 (112 aa).

Residues arginine 74 and histidine 79 contribute to the active site. The RX(4)HXY motif motif lies at 74–81 (RDKLIHEY). Tyrosine 81 bears the O-di-AMP-tyrosine mark.

The protein belongs to the HepT RNase toxin family. As to quaternary structure, homodimer, probably forms a complex with cognate antitoxin TTE0751. In terms of processing, modified by cognate antitoxin TTE0751; probably at least 2 successive AMPylation events occur on Tyr-81.

Its function is as follows. Probable toxic component of a putative type VII toxin-antitoxin (TA) system, probably an RNase. Probably neutralized by cognate antitoxin TTE0751. Neutralization may be due to AMPylation by TTE0751. This is Putative RNase TTE0752 from Caldanaerobacter subterraneus subsp. tengcongensis (strain DSM 15242 / JCM 11007 / NBRC 100824 / MB4) (Thermoanaerobacter tengcongensis).